The following is a 232-amino-acid chain: Purine nucleoside phosphorylase DeoD-type (232 aa).

His4 is an a purine D-ribonucleoside binding site. Residues Gly20, Arg24, Arg43, and 87–90 contribute to the phosphate site; that span reads RVGS. Residues Glu162, 178–180, and 202–203 each bind a purine D-ribonucleoside; these read EME and SD. Asp203 serves as the catalytic Proton donor.

The protein belongs to the PNP/UDP phosphorylase family. As to quaternary structure, homohexamer; trimer of homodimers.

It carries out the reaction a purine D-ribonucleoside + phosphate = a purine nucleobase + alpha-D-ribose 1-phosphate. It catalyses the reaction a purine 2'-deoxy-D-ribonucleoside + phosphate = a purine nucleobase + 2-deoxy-alpha-D-ribose 1-phosphate. In terms of biological role, catalyzes the reversible phosphorolytic breakdown of the N-glycosidic bond in the beta-(deoxy)ribonucleoside molecules, with the formation of the corresponding free purine bases and pentose-1-phosphate. The sequence is that of Purine nucleoside phosphorylase DeoD-type from Bacillus velezensis (strain DSM 23117 / BGSC 10A6 / LMG 26770 / FZB42) (Bacillus amyloliquefaciens subsp. plantarum).